The sequence spans 487 residues: UDP-N-acetylmuramate--L-alanine ligase (487 aa).

129–135 (GTHGKTT) provides a ligand contact to ATP.

It belongs to the MurCDEF family.

The protein localises to the cytoplasm. The enzyme catalyses UDP-N-acetyl-alpha-D-muramate + L-alanine + ATP = UDP-N-acetyl-alpha-D-muramoyl-L-alanine + ADP + phosphate + H(+). It participates in cell wall biogenesis; peptidoglycan biosynthesis. Cell wall formation. This chain is UDP-N-acetylmuramate--L-alanine ligase, found in Aliivibrio fischeri (strain ATCC 700601 / ES114) (Vibrio fischeri).